Reading from the N-terminus, the 501-residue chain is ATP synthase subunit alpha (501 aa).

169–176 is an ATP binding site; the sequence is GDRQTGKT.

Belongs to the ATPase alpha/beta chains family. As to quaternary structure, F-type ATPases have 2 components, CF(1) - the catalytic core - and CF(0) - the membrane proton channel. CF(1) has five subunits: alpha(3), beta(3), gamma(1), delta(1), epsilon(1). CF(0) has three main subunits: a(1), b(2) and c(9-12). The alpha and beta chains form an alternating ring which encloses part of the gamma chain. CF(1) is attached to CF(0) by a central stalk formed by the gamma and epsilon chains, while a peripheral stalk is formed by the delta and b chains.

It localises to the cell membrane. It catalyses the reaction ATP + H2O + 4 H(+)(in) = ADP + phosphate + 5 H(+)(out). In terms of biological role, produces ATP from ADP in the presence of a proton gradient across the membrane. The alpha chain is a regulatory subunit. The polypeptide is ATP synthase subunit alpha (Streptococcus thermophilus (strain CNRZ 1066)).